Reading from the N-terminus, the 356-residue chain is D-alanine--D-alanine ligase (356 aa).

In terms of domain architecture, ATP-grasp spans 146–350 (KKLLVAEGLP…YAELLDTLIQ (205 aa)). Residue 173 to 228 (KERLGLPVFVKPARGGSSIGVSKVSAWEDLEAALTLAYESDDKVLIEPEISGAEVE) participates in ATP binding. Mg(2+) is bound by residues D305, E317, and N319.

It belongs to the D-alanine--D-alanine ligase family. Mg(2+) serves as cofactor. Mn(2+) is required as a cofactor.

It localises to the cytoplasm. It carries out the reaction 2 D-alanine + ATP = D-alanyl-D-alanine + ADP + phosphate + H(+). It participates in cell wall biogenesis; peptidoglycan biosynthesis. Cell wall formation. This is D-alanine--D-alanine ligase from Corynebacterium aurimucosum (strain ATCC 700975 / DSM 44827 / CIP 107346 / CN-1) (Corynebacterium nigricans).